The sequence spans 564 residues: Isopullulanase (564 aa).

The signal sequence occupies residues 1–19; sequence MRSTGYLLTLSAAFQVAQA. N-linked (GlcNAc...) asparagine glycosylation is found at asparagine 24, asparagine 94, asparagine 115, asparagine 138, asparagine 186, asparagine 210, asparagine 305, asparagine 381, asparagine 448, asparagine 455, asparagine 460, asparagine 486, asparagine 491, asparagine 503, and asparagine 535.

Post-translationally, N-glycosylated.

The protein resides in the secreted. It carries out the reaction Hydrolysis of pullulan to isopanose (6-alpha-maltosylglucose).. In terms of biological role, hydrolyzes pullulan, a linear polymer which is composed of maltotriose units with alpha-1,6 glucosidic linkages, to produce isopanose (Glca1-4Glca1-6Glc). This Aspergillus niger protein is Isopullulanase (ipuA).